The following is a 329-amino-acid chain: Apolipoprotein E (329 aa).

The first 18 residues, 1 to 18 (MKVLWAALVVALLAGCWA), serve as a signal peptide directing secretion. Repeat copies occupy residues 92–113 (TLME…EQLG), 114–135 (PMAS…ARLR), 136–157 (SDME…AMLG), 158–179 (QSTE…KRVL), 180–201 (RDAE…EGAE), 202–223 (RSVS…TRHA), 224–245 (KVDA…QQLR), and 246–267 (GRLE…EQME). The segment at 92 to 267 (TLMEETMKEI…HLDEVREQME (176 aa)) is 8 X 22 AA approximate tandem repeats. Position 155 is a methionine sulfoxide (methionine 155). A Phosphoserine modification is found at serine 159. Positions 170 to 180 (HMRKLRKRVLR) are LDL and other lipoprotein receptors binding. 174–177 (LRKR) provides a ligand contact to heparin. The interval 222 to 302 (HAKVDALATQ…GWFEPLVEDM (81 aa)) is lipid-binding and lipoprotein association. 241-248 (GQQLRGRL) contributes to the heparin binding site. The tract at residues 278 to 329 (NQMRQQAEAFQARLKGWFEPLVEDMQRQWAVLVEKVQAAVGTSPTTPPVETK) is homooligomerization. The segment at 290–302 (RLKGWFEPLVEDM) is specificity for association with VLDL.

This sequence belongs to the apolipoprotein A1/A4/E family. As to quaternary structure, homotetramer. May interact with ABCA1; functionally associated with ABCA1 in the biogenesis of HDLs. May interact with APP/A4 amyloid-beta peptide; the interaction is extremely stable in vitro but its physiological significance is unclear. May interact with MAPT. May interact with MAP2. In the cerebrospinal fluid, interacts with secreted SORL1. Interacts with PMEL; this allows the loading of PMEL luminal fragment on ILVs to induce fibril nucleation. APOE exists as multiple glycosylated and sialylated glycoforms within cells and in plasma. The extent of glycosylation and sialylation are tissue and context specific. In terms of processing, glycated in plasma VLDL. Post-translationally, phosphorylated by FAM20C in the extracellular medium.

Its subcellular location is the secreted. It is found in the extracellular space. It localises to the extracellular matrix. The protein resides in the extracellular vesicle. The protein localises to the endosome. Its subcellular location is the multivesicular body. Its function is as follows. APOE is an apolipoprotein, a protein associating with lipid particles, that mainly functions in lipoprotein-mediated lipid transport between organs via the plasma and interstitial fluids. APOE is a core component of plasma lipoproteins and is involved in their production, conversion and clearance. Apolipoproteins are amphipathic molecules that interact both with lipids of the lipoprotein particle core and the aqueous environment of the plasma. As such, APOE associates with chylomicrons, chylomicron remnants, very low density lipoproteins (VLDL) and intermediate density lipoproteins (IDL) but shows a preferential binding to high-density lipoproteins (HDL). It also binds a wide range of cellular receptors including the LDL receptor/LDLR, the LDL receptor-related proteins LRP1, LRP2 and LRP8 and the very low-density lipoprotein receptor/VLDLR that mediate the cellular uptake of the APOE-containing lipoprotein particles. Finally, APOE also has a heparin-binding activity and binds heparan-sulfate proteoglycans on the surface of cells, a property that supports the capture and the receptor-mediated uptake of APOE-containing lipoproteins by cells. A main function of APOE is to mediate lipoprotein clearance through the uptake of chylomicrons, VLDLs, and HDLs by hepatocytes. APOE is also involved in the biosynthesis by the liver of VLDLs as well as their uptake by peripheral tissues ensuring the delivery of triglycerides and energy storage in muscle, heart and adipose tissues. By participating in the lipoprotein-mediated distribution of lipids among tissues, APOE plays a critical role in plasma and tissues lipid homeostasis. APOE is also involved in two steps of reverse cholesterol transport, the HDLs-mediated transport of cholesterol from peripheral tissues to the liver, and thereby plays an important role in cholesterol homeostasis. First, it is functionally associated with ABCA1 in the biogenesis of HDLs in tissues. Second, it is enriched in circulating HDLs and mediates their uptake by hepatocytes. APOE also plays an important role in lipid transport in the central nervous system, regulating neuron survival and sprouting. This Eumetopias jubatus (Steller sea lion) protein is Apolipoprotein E (APOE).